We begin with the raw amino-acid sequence, 214 residues long: MDRTIADLRKDYTLEALSEVEVDTNPFRQFKRWFEQALAAQLPEPNAMTIATSTPDGQPSARMVLLKDFDERGFVFFTNYNSRKGQELAENPQAALVFWWAELERQVRISGRVEKVSESESDYYFYSRPANSRLGAWVSNQSEIIASREVLEQRMQEFQHKYENQEIPRPSHWGGLRVIPSQIEFWQGRSSRLHDRLLYTLLNDDSWEIHRLSP.

Substrate contacts are provided by residues 9-12 (RKDY) and Lys67. FMN contacts are provided by residues 62–67 (RMVLLK), 77–78 (FT), Arg83, Lys84, and Gln106. Tyr124, Arg128, and Ser132 together coordinate substrate. FMN-binding positions include 141-142 (QS) and Trp186. Substrate is bound at residue 192–194 (RLH). Residue Arg196 coordinates FMN.

This sequence belongs to the pyridoxamine 5'-phosphate oxidase family. As to quaternary structure, homodimer. FMN serves as cofactor.

The enzyme catalyses pyridoxamine 5'-phosphate + O2 + H2O = pyridoxal 5'-phosphate + H2O2 + NH4(+). The catalysed reaction is pyridoxine 5'-phosphate + O2 = pyridoxal 5'-phosphate + H2O2. It participates in cofactor metabolism; pyridoxal 5'-phosphate salvage; pyridoxal 5'-phosphate from pyridoxamine 5'-phosphate: step 1/1. Its pathway is cofactor metabolism; pyridoxal 5'-phosphate salvage; pyridoxal 5'-phosphate from pyridoxine 5'-phosphate: step 1/1. Catalyzes the oxidation of either pyridoxine 5'-phosphate (PNP) or pyridoxamine 5'-phosphate (PMP) into pyridoxal 5'-phosphate (PLP). The polypeptide is Pyridoxine/pyridoxamine 5'-phosphate oxidase (Trichormus variabilis (strain ATCC 29413 / PCC 7937) (Anabaena variabilis)).